The sequence spans 708 residues: tRNA(Met) cytidine acetyltransferase TmcA (708 aa).

ATP-binding positions include Q189, 215–224 (GRGKTSALGL), and R357. One can recognise an N-acetyltransferase domain in the interval 398-574 (PECVEQPERL…YSLLMVRGEH (177 aa)). Acetyl-CoA is bound by residues 502–504 (IAV) and 509–515 (QRQGIGS).

This sequence belongs to the RNA cytidine acetyltransferase family. TmcA subfamily.

The protein localises to the cytoplasm. It carries out the reaction cytidine(34) in elongator tRNA(Met) + acetyl-CoA + ATP + H2O = N(4)-acetylcytidine(34) in elongator tRNA(Met) + ADP + phosphate + CoA + H(+). Its function is as follows. Catalyzes the formation of N(4)-acetylcytidine (ac(4)C) at the wobble position of tRNA(Met), by using acetyl-CoA as an acetyl donor and ATP (or GTP). The polypeptide is tRNA(Met) cytidine acetyltransferase TmcA (Vibrio cholerae serotype O1 (strain ATCC 39315 / El Tor Inaba N16961)).